We begin with the raw amino-acid sequence, 876 residues long: Alanine--tRNA ligase (876 aa).

Zn(2+) is bound by residues histidine 568, histidine 572, cysteine 670, and histidine 674.

It belongs to the class-II aminoacyl-tRNA synthetase family. The cofactor is Zn(2+).

The protein localises to the cytoplasm. The enzyme catalyses tRNA(Ala) + L-alanine + ATP = L-alanyl-tRNA(Ala) + AMP + diphosphate. Its function is as follows. Catalyzes the attachment of alanine to tRNA(Ala) in a two-step reaction: alanine is first activated by ATP to form Ala-AMP and then transferred to the acceptor end of tRNA(Ala). Also edits incorrectly charged Ser-tRNA(Ala) and Gly-tRNA(Ala) via its editing domain. The chain is Alanine--tRNA ligase from Geobacter metallireducens (strain ATCC 53774 / DSM 7210 / GS-15).